A 423-amino-acid polypeptide reads, in one-letter code: POU domain, class 5, transcription factor 1.3 (423 aa).

Residues 85-211 are disordered; that stretch reads GALSSGDPSP…GSGNEEDGTT (127 aa). Basic and acidic residues predominate over residues 94 to 110; it reads PEGRNEEDHGSISEERS. 3 stretches are compositionally biased toward polar residues: residues 111-120, 156-173, and 194-203; these read SGTPSPNSPM, PQQSDCSPTASLESGASN, and PSPNNASFGS. A POU-specific domain is found at 207–281; the sequence is EDGTTLEEME…LLEQWLGEAE (75 aa). The homeobox DNA-binding region spans 301–360; it reads KRKMRTCFDSVLKGRLEGHFMCNQKPGARELAEIAKELGLEKDVVRVWFCNRRQKEKSKS.

The protein belongs to the POU transcription factor family. Class-5 subfamily. Interacts with the transcription factors tcf7l1/tcf3 and vegt.

Its subcellular location is the nucleus. Functionally, transcription factor that binds to the octamer motif (5'-ATTTGCAT-3'). Antagonizes the activity of nodal/activin signaling during gastrulation to suppress mesendoderm formation. Acts maternally to inhibit vegt and beta-catenin-activated gene transcription, probably by forming a transcriptional repression complex on the promoters of target genes. Binds to an octamer motif in interspersed RNA. The protein is POU domain, class 5, transcription factor 1.3 (pou5f1.3) of Xenopus tropicalis (Western clawed frog).